A 387-amino-acid polypeptide reads, in one-letter code: Succinate--CoA ligase [ADP-forming] subunit beta (387 aa).

The region spanning 9-236 (KELFAKHNVP…KDATDPLELK (228 aa)) is the ATP-grasp domain. Residues K45, 52–54 (GRG), S94, and E99 contribute to the ATP site. Mg(2+) contacts are provided by N191 and D205. Residues N256 and 318 to 320 (GIT) contribute to the substrate site.

It belongs to the succinate/malate CoA ligase beta subunit family. As to quaternary structure, heterotetramer of two alpha and two beta subunits. The cofactor is Mg(2+).

It catalyses the reaction succinate + ATP + CoA = succinyl-CoA + ADP + phosphate. It carries out the reaction GTP + succinate + CoA = succinyl-CoA + GDP + phosphate. It participates in carbohydrate metabolism; tricarboxylic acid cycle; succinate from succinyl-CoA (ligase route): step 1/1. Its function is as follows. Succinyl-CoA synthetase functions in the citric acid cycle (TCA), coupling the hydrolysis of succinyl-CoA to the synthesis of either ATP or GTP and thus represents the only step of substrate-level phosphorylation in the TCA. The beta subunit provides nucleotide specificity of the enzyme and binds the substrate succinate, while the binding sites for coenzyme A and phosphate are found in the alpha subunit. This Mycolicibacterium gilvum (strain PYR-GCK) (Mycobacterium gilvum (strain PYR-GCK)) protein is Succinate--CoA ligase [ADP-forming] subunit beta.